A 357-amino-acid polypeptide reads, in one-letter code: COP9 signalosome complex subunit 5a (357 aa).

M1 is subject to N-acetylmethionine. The MPN domain maps to 59 to 196 (VHISALALLK…IGAFRTYPEG (138 aa)). Zn(2+)-binding residues include H142, H144, and D155. The JAMM motif motif lies at 142 to 155 (HSHPGYGCWLSGID). Positions 338–357 (ARQSKKSADDSSDPEPMITS) are disordered.

Belongs to the peptidase M67A family. CSN5 subfamily. As to quaternary structure, component of the CSN complex, probably composed of CSN1, CSN2, CSN3, CSN4, CSN5 (CSN5A or CSN5B), CSN6 (CSN6A or CSN6B), CSN7 and CSN8. CSN5A or CSN5B are present within distinct CSN complexes each containing only one copy of CSN5. Interacts with itself. In the complex, it is located in the center and probably interacts directly with CSN4 and CSN6A or CSN6B. Present also in subcomplex forms which inculdes CSN3. Also exists as monomeric form. Interacts with CYT1 in vitro, but not in planta. A divalent metal cation serves as cofactor. As to expression, ubiquitously expressed. Highly expressed in flowers and roots. Expressed at lower level in seedlings and siliques.

Its subcellular location is the cytoplasm. The protein resides in the nucleus. Its function is as follows. Probable protease subunit of the COP9 signalosome complex (CSN), a complex involved in various cellular and developmental processes such as photomorphogenesis and auxin and jasmonate responses. The CSN complex is an essential regulator of the ubiquitin (Ubl) conjugation pathway by mediating the deneddylation of the cullin subunits of the SCF-type E3 ligase complexes, leading to decrease the Ubl ligase activity of SCF. In the complex, it probably acts as the catalytic center that mediates the cleavage of Nedd8 from cullins. It however has no metalloprotease activity by itself and requires the other subunits of the CSN complex. The CSN complex is involved in repression of photomorphogenesis in darkness by regulating the activity of COP1-containing Ubl ligase complexes. The complex is also required for degradation of PSIAA6 by regulating the activity of the Ubl ligase SCF-TIR complex. Involved in CSN's deneddylation/derubylation activity. Required for the deneddylation of all cullins. Essential for the structural integrity of the CSN holocomplex. This Arabidopsis thaliana (Mouse-ear cress) protein is COP9 signalosome complex subunit 5a.